A 287-amino-acid polypeptide reads, in one-letter code: Gliotoxin thiomethyltransferase GtmA (287 aa).

2 residues coordinate S-adenosyl-L-methionine: Thr-27 and Ala-54. Cysteines 55 and 80 form a disulfide. S-adenosyl-L-methionine-binding residues include Asp-82, Met-87, Asn-109, Ala-110, Ala-126, and Arg-248.

It belongs to the class I-like SAM-binding methyltransferase superfamily.

The protein localises to the cytoplasm. It carries out the reaction a thiol + S-adenosyl-L-methionine = a methyl thioether + S-adenosyl-L-homocysteine + H(+). Functionally, S-methyltransferase that catalyzes the irreversible conversion of the secondary metabolite gliotoxin to bis(methylthio)gliotoxin (BmGT). Gliotoxin, a member of the epipolythiodioxopiperazine (ETP) class of toxins, is characterized by a disulfide bridged cyclic dipeptide. Its thiol groups are essential for bioactivity, as they conjugate to sulfur-containing proteins, disturb the intracellular redox equilibrium, and generate reactive oxygen species by cycling between reduced and oxidized states. The enzyme prevents self-intoxication of the fungus by irreversible conversion of the toxic gliotoxin to a biologically inactive bis-thiomethylated derivative. Appears to negatively regulate gliotoxin biosynthesis. The sequence is that of Gliotoxin thiomethyltransferase GtmA from Aspergillus fumigatus (strain ATCC MYA-4609 / CBS 101355 / FGSC A1100 / Af293) (Neosartorya fumigata).